Reading from the N-terminus, the 82-residue chain is Large ribosomal subunit protein eL14 (82 aa).

It belongs to the eukaryotic ribosomal protein eL14 family.

This Pyrococcus abyssi (strain GE5 / Orsay) protein is Large ribosomal subunit protein eL14.